A 98-amino-acid chain; its full sequence is Large ribosomal subunit protein uL23c (98 aa).

The protein belongs to the universal ribosomal protein uL23 family. In terms of assembly, part of the 50S ribosomal subunit.

The protein resides in the plastid. The protein localises to the chloroplast. In terms of biological role, binds to 23S rRNA. This Thalassiosira pseudonana (Marine diatom) protein is Large ribosomal subunit protein uL23c (rpl23).